The sequence spans 151 residues: Inorganic triphosphatase (151 aa).

The 148-residue stretch at 1–148 (MTEIERKFLV…KRYKNKALAL (148 aa)) folds into the CYTH domain. Residue Tyr-27 is the Proton acceptor of the active site.

Homodimer.

The catalysed reaction is triphosphate + H2O = phosphate + diphosphate. Activated by magnesium and mangenese ions, and inhibited by calcium, zinc and copper ions. Functionally, involved in the hydrolysis of the beta-gamma-phosphoanhydride linkage of triphosphate-containing substrates (inorganic or nucleoside-linked). Catalyzes the hydrolysis of inorganic triphosphate (PPPi). The enzyme has a strong preference for linear PPPi compared with cyclic PPPi (cyclic trimetaphosphate) and to the linear P4. The longer chains polyphosphate are not hydrolyzed. It has only a slight thiamine triphosphatase (ThTPase) activity. Nucleoside triphosphatase activity is negligible in the presence of magnesium, but a small activity is observed in the presence of manganese, in particular with GTP. The polypeptide is Inorganic triphosphatase (Nitrosomonas europaea (strain ATCC 19718 / CIP 103999 / KCTC 2705 / NBRC 14298)).